A 382-amino-acid polypeptide reads, in one-letter code: Alkanesulfonate monooxygenase (382 aa).

The protein belongs to the SsuD family.

It carries out the reaction an alkanesulfonate + FMNH2 + O2 = an aldehyde + FMN + sulfite + H2O + 2 H(+). In terms of biological role, catalyzes the desulfonation of aliphatic sulfonates. The protein is Alkanesulfonate monooxygenase of Pseudomonas putida (strain ATCC 47054 / DSM 6125 / CFBP 8728 / NCIMB 11950 / KT2440).